Here is a 159-residue protein sequence, read N- to C-terminus: Probable carbonic anhydrase (159 aa).

Substrate contacts are provided by residues 33-35 (RGD) and 48-49 (QD). Positions 54, 71, and 76 each coordinate Zn(2+).

This sequence belongs to the gamma-class carbonic anhydrase family. It depends on Zn(2+) as a cofactor.

It carries out the reaction hydrogencarbonate + H(+) = CO2 + H2O. Its function is as follows. Probably reversibly hydrates carbon dioxide. The polypeptide is Probable carbonic anhydrase (Methanocaldococcus jannaschii (strain ATCC 43067 / DSM 2661 / JAL-1 / JCM 10045 / NBRC 100440) (Methanococcus jannaschii)).